A 471-amino-acid polypeptide reads, in one-letter code: D-hydantoinase (471 aa).

The Zn(2+) site is built by His58, His60, and Lys150. Lys150 is subject to N6-carboxylysine. Residue Tyr155 coordinates substrate. His183 and His239 together coordinate Zn(2+). Ser288 is a binding site for substrate. Asp315 is a Zn(2+) binding site. Residue Asn337 participates in substrate binding.

This sequence belongs to the metallo-dependent hydrolases superfamily. Hydantoinase/dihydropyrimidinase family. In terms of assembly, homotetramer. Requires Zn(2+) as cofactor. Ni(2+) serves as cofactor. It depends on Co(2+) as a cofactor. Mn(2+) is required as a cofactor. Post-translationally, carboxylation allows a single lysine to coordinate two zinc ions.

Completely inhibited by p-chloromercuribenzoate and partially inhibited by metal chelating agents. Catalyzes the stereospecific hydrolysis of the cyclic amide bond of D-hydantoin. Has no activity on dihydropyrimidines. The protein is D-hydantoinase of Geobacillus stearothermophilus (Bacillus stearothermophilus).